Here is a 619-residue protein sequence, read N- to C-terminus: Translation initiation factor eIF2B subunit delta (619 aa).

Residues 21 to 32 (GDYLDSKQEGKP) are compositionally biased toward basic and acidic residues. Positions 21–251 (GDYLDSKQEG…PKQRGKITKK (231 aa)) are disordered. The span at 42–56 (TNTSPVSIPTIISPP) shows a compositional bias: low complexity. Over residues 57-84 (LGSNNSNYGKSPKSSYDNKQTSPLLSAS) the composition is skewed to polar residues. Over residues 85–98 (NNRKNNNNNNNNNN) the composition is skewed to low complexity. Polar residues predominate over residues 99-125 (ATSPKDSSIIGKNNVNSDLSKVSSSLN). A compositionally biased stretch (low complexity) spans 136-199 (STSSTPTSTP…KQQSKQQATQ (64 aa)). The segment covering 200–244 (QDKKDKEQQQQQQDKQDKESNEIKGSKEVAKDGQHGVKQFDDPKQ) has biased composition (basic and acidic residues).

It belongs to the eIF-2B alpha/beta/delta subunits family. Component of the translation initiation factor 2B (eIF2B) complex which is a heterodecamer of two sets of five different subunits: alpha, beta, gamma, delta and epsilon. Subunits alpha, beta and delta comprise a regulatory subcomplex and subunits epsilon and gamma comprise a catalytic subcomplex. Within the complex, the hexameric regulatory complex resides at the center, with the two heterodimeric catalytic subcomplexes bound on opposite sides.

It localises to the cytoplasm. It is found in the cytosol. Functionally, acts as a component of the translation initiation factor 2B (eIF2B) complex, which catalyzes the exchange of GDP for GTP on eukaryotic initiation factor 2 (eIF2) gamma subunit. Its guanine nucleotide exchange factor activity is repressed when bound to eIF2 complex phosphorylated on the alpha subunit, thereby limiting the amount of methionyl-initiator methionine tRNA available to the ribosome and consequently global translation is repressed. This Dictyostelium discoideum (Social amoeba) protein is Translation initiation factor eIF2B subunit delta (eif2b4).